A 416-amino-acid chain; its full sequence is Enolase (416 aa).

Residue Q160 coordinates (2R)-2-phosphoglycerate. The Proton donor role is filled by E204. 3 residues coordinate Mg(2+): D239, E282, and D308. Positions 333, 362, 363, and 384 each coordinate (2R)-2-phosphoglycerate. The active-site Proton acceptor is K333.

This sequence belongs to the enolase family. Mg(2+) is required as a cofactor.

Its subcellular location is the cytoplasm. The protein localises to the secreted. It is found in the cell surface. The enzyme catalyses (2R)-2-phosphoglycerate = phosphoenolpyruvate + H2O. It participates in carbohydrate degradation; glycolysis; pyruvate from D-glyceraldehyde 3-phosphate: step 4/5. Functionally, catalyzes the reversible conversion of 2-phosphoglycerate (2-PG) into phosphoenolpyruvate (PEP). It is essential for the degradation of carbohydrates via glycolysis. In Metallosphaera sedula (strain ATCC 51363 / DSM 5348 / JCM 9185 / NBRC 15509 / TH2), this protein is Enolase.